Here is a 206-residue protein sequence, read N- to C-terminus: Pyridoxine/pyridoxamine 5'-phosphate oxidase (206 aa).

Residues 53 to 58, 68 to 69, Lys-75, and Gln-97 contribute to the FMN site; these read RMVLLK and YT. Lys-58 provides a ligand contact to substrate. 3 residues coordinate substrate: Tyr-115, Arg-119, and Ser-123. FMN is bound by residues 132 to 133 and Trp-177; that span reads QS. Residue 183 to 185 participates in substrate binding; sequence RLH. Arg-187 provides a ligand contact to FMN.

Belongs to the pyridoxamine 5'-phosphate oxidase family. Homodimer. The cofactor is FMN.

The catalysed reaction is pyridoxamine 5'-phosphate + O2 + H2O = pyridoxal 5'-phosphate + H2O2 + NH4(+). The enzyme catalyses pyridoxine 5'-phosphate + O2 = pyridoxal 5'-phosphate + H2O2. It functions in the pathway cofactor metabolism; pyridoxal 5'-phosphate salvage; pyridoxal 5'-phosphate from pyridoxamine 5'-phosphate: step 1/1. It participates in cofactor metabolism; pyridoxal 5'-phosphate salvage; pyridoxal 5'-phosphate from pyridoxine 5'-phosphate: step 1/1. Catalyzes the oxidation of either pyridoxine 5'-phosphate (PNP) or pyridoxamine 5'-phosphate (PMP) into pyridoxal 5'-phosphate (PLP). In Rhizobium meliloti (strain 1021) (Ensifer meliloti), this protein is Pyridoxine/pyridoxamine 5'-phosphate oxidase.